The following is a 217-amino-acid chain: MNLVLMGLPGAGKGTQGERIVEDYGIPHISTGDMFRAAMKEETPLGLEAKSYIDKGELVPDEVTIGIVKERLGKDDCERGFLLDGFPRTVAQAEALEEILEEYGKPIDYVINIEVDKDVLMERLTGRRICSVCGTTYHLVFNPPKTPGICDKDGGELYQRADDNEETVSKRLEVNMKQTQPLLDFYSEKGYLANVNGQQDIQDVYADVKDLLGGLKK.

Residue 10–15 (GAGKGT) participates in ATP binding. The interval 30–59 (STGDMFRAAMKEETPLGLEAKSYIDKGELV) is NMP. Residues threonine 31, arginine 36, 57–59 (ELV), 85–88 (GFPR), and glutamine 92 contribute to the AMP site. The interval 126–163 (GRRICSVCGTTYHLVFNPPKTPGICDKDGGELYQRADD) is LID. Arginine 127 provides a ligand contact to ATP. The Zn(2+) site is built by cysteine 130 and cysteine 133. Residue 136–137 (TY) coordinates ATP. The Zn(2+) site is built by cysteine 150 and aspartate 153. Positions 160 and 171 each coordinate AMP. Residue glutamine 199 coordinates ATP.

It belongs to the adenylate kinase family. As to quaternary structure, monomer.

The protein resides in the cytoplasm. It catalyses the reaction AMP + ATP = 2 ADP. It participates in purine metabolism; AMP biosynthesis via salvage pathway; AMP from ADP: step 1/1. In terms of biological role, catalyzes the reversible transfer of the terminal phosphate group between ATP and AMP. Plays an important role in cellular energy homeostasis and in adenine nucleotide metabolism. This is Adenylate kinase from Bacillus subtilis (strain 168).